We begin with the raw amino-acid sequence, 1193 residues long: Probable DNA-directed RNA polymerase II subunit RPB2 homolog (1193 aa).

Asp808 serves as a coordination point for Mg(2+). Residues Cys1137, Cys1140, Cys1155, and Cys1158 each contribute to the Zn(2+) site. A C4-type zinc finger spans residues 1137-1158 (CVPCKSYFKVVKTQNGFFCSGC).

The protein belongs to the RNA polymerase beta chain family.

The enzyme catalyses RNA(n) + a ribonucleoside 5'-triphosphate = RNA(n+1) + diphosphate. Its function is as follows. Component of the DNA-dependent RNA polymerase that catalyzes the transcription of DNA into RNA using the four ribonucleoside triphosphates as substrates. Second largest component of RNA polymerase II which synthesizes mRNA precursors and many functional non-coding RNAs. Proposed to contribute to the polymerase catalytic activity and forms the polymerase active center together with the largest subunit. The protein is Probable DNA-directed RNA polymerase II subunit RPB2 homolog of Invertebrate iridescent virus 6 (IIV-6).